The chain runs to 361 residues: Spermatogenesis-associated protein 17 (361 aa).

IQ domains lie at 32-61, 55-84, and 91-120; these read ENDAAVKIQSWFRGCQVRAYVRHLNRIVTI, LNRIVTIIQKWWRSFLGRKQYQLTVQVAYY, and YNAMAVRKQRRWRGYRVRKYLFNYYYLKEY.

Its subcellular location is the cytoplasm. The polypeptide is Spermatogenesis-associated protein 17 (SPATA17) (Macaca fascicularis (Crab-eating macaque)).